Consider the following 481-residue polypeptide: MELTLNEKRLLVALGPMGSADAAVLAEKMDTRREAVVQYANLAGDRGLVDVEKHVARRYVPTEEGRAYMGKGLPERQVLESFEESIPMRDLQGHPLAKIAIGWMRKKGWIAITGGVVQKTGKTAPGPDEAAFVRLAEKGEIADGEGVADLAKRGLAIEEETVAYTVSITPRGRELLSQGLDLREEAGTLTREQILSGEWKSLPLRRYDVTKLPKRAYPGKVHPYQRIIDEMRRILFDMGFEEMSGGIVQSSFWNFDALFQPQDHPAREMQDTFFLGERRPLPAGYERVRDMHEHGGETSSTGWGGTWSAEKAEQCVLRTHTTSLSIQHLAAHPKPPVKAFCIGRVYRREAIDPTHLAEFEQLEGIVMDEDVNLRHLLGFLKEFYAKMGFEKVRFRPGYFPYTEPSVEPEVYVDGLGWVELGGSGIFRQEVTAPFGIEHPVLAWGLGISRVAMLRLGLRDLRHLYRSDIEWIRETPVYGGRR.

Residues Thr322, 361-363, and Tyr401 contribute to the L-phenylalanine site; that span reads QLE. Glu403 provides a ligand contact to Mg(2+). Phe426 lines the L-phenylalanine pocket.

This sequence belongs to the class-II aminoacyl-tRNA synthetase family. Phe-tRNA synthetase alpha subunit type 2 subfamily. As to quaternary structure, tetramer of two alpha and two beta subunits. The cofactor is Mg(2+).

Its subcellular location is the cytoplasm. The enzyme catalyses tRNA(Phe) + L-phenylalanine + ATP = L-phenylalanyl-tRNA(Phe) + AMP + diphosphate + H(+). This chain is Phenylalanine--tRNA ligase alpha subunit, found in Methanoculleus marisnigri (strain ATCC 35101 / DSM 1498 / JR1).